A 159-amino-acid chain; its full sequence is Urease accessory protein UreE (159 aa).

This sequence belongs to the UreE family.

The protein resides in the cytoplasm. Functionally, involved in urease metallocenter assembly. Binds nickel. Probably functions as a nickel donor during metallocenter assembly. This chain is Urease accessory protein UreE, found in Pseudomonas entomophila (strain L48).